The primary structure comprises 954 residues: Glycine dehydrogenase (decarboxylating) (954 aa).

Lys-706 is subject to N6-(pyridoxal phosphate)lysine.

Belongs to the GcvP family. As to quaternary structure, the glycine cleavage system is composed of four proteins: P, T, L and H. It depends on pyridoxal 5'-phosphate as a cofactor.

The enzyme catalyses N(6)-[(R)-lipoyl]-L-lysyl-[glycine-cleavage complex H protein] + glycine + H(+) = N(6)-[(R)-S(8)-aminomethyldihydrolipoyl]-L-lysyl-[glycine-cleavage complex H protein] + CO2. Its function is as follows. The glycine cleavage system catalyzes the degradation of glycine. The P protein binds the alpha-amino group of glycine through its pyridoxal phosphate cofactor; CO(2) is released and the remaining methylamine moiety is then transferred to the lipoamide cofactor of the H protein. This Thermosynechococcus vestitus (strain NIES-2133 / IAM M-273 / BP-1) protein is Glycine dehydrogenase (decarboxylating).